The sequence spans 228 residues: Urease accessory protein UreF (228 aa).

The protein belongs to the UreF family. As to quaternary structure, ureD, UreF and UreG form a complex that acts as a GTP-hydrolysis-dependent molecular chaperone, activating the urease apoprotein by helping to assemble the nickel containing metallocenter of UreC. The UreE protein probably delivers the nickel.

Its subcellular location is the cytoplasm. Required for maturation of urease via the functional incorporation of the urease nickel metallocenter. This is Urease accessory protein UreF from Yersinia enterocolitica serotype O:8 / biotype 1B (strain NCTC 13174 / 8081).